A 182-amino-acid polypeptide reads, in one-letter code: Large ribosomal subunit protein eL15 (182 aa).

The protein belongs to the eukaryotic ribosomal protein eL15 family.

In Methanothermobacter thermautotrophicus (strain ATCC 29096 / DSM 1053 / JCM 10044 / NBRC 100330 / Delta H) (Methanobacterium thermoautotrophicum), this protein is Large ribosomal subunit protein eL15 (rpl15e).